The following is an 833-amino-acid chain: ERAD-associated E3 ubiquitin-protein ligase component HRD3 (833 aa).

The N-terminal stretch at 1-20 (MITLLLYLCVICNAIVLIRA) is a signal peptide. N-linked (GlcNAc...) asparagine glycosylation is found at asparagine 101, asparagine 123, and asparagine 142. A Sel1-like 1 repeat occupies 103 to 139 (SEATYTLSQIHLWSQYNFPHNMTLAHKYLEKFNDLTH). Sel1-like repeat units follow at residues 143 to 186 (HSAI…QLGN), 187 to 222 (LKAKQVLAYKYYSGFNVPRNFHKSLVLYRDIAEQLR), 413 to 445 (GRACIDLGLINQYITNNISQAISYYMKAMKTQA), 552 to 595 (ETAQ…KQGN), 596 to 627 (IDAGVVAGDIYFQMQNYSKAMALYQGAALKYS), and 628 to 663 (IQAIWNLGYMHEHGLGVNRDFHLAKRYYDQVSEHDH). Asparagine 429 is a glycosylation site (N-linked (GlcNAc...) asparagine). Asparagine 611 is a glycosylation site (N-linked (GlcNAc...) asparagine). Residues 768–788 (LVTMGCILGIFLLSILMSTLA) form a helical membrane-spanning segment. Residues 805–824 (NGNRQQEQQQQQQAQGPPGW) are disordered. The segment covering 809 to 819 (QQEQQQQQQAQ) has biased composition (low complexity).

It belongs to the sel-1 family. As to quaternary structure, component of the HRD1 ubiquitin ligase complex which contains the E3 ligase HRD1, its cofactors HRD3, USA1 and DER1, substrate recruiting factor YOS9 and CDC48-binding protein UBX2. Within the complex, interacts directly with HRD1 and YOS9 (via N-terminus). In ERAD-L, HRD3 and YOS9 jointly bind misfolded glycoproteins in the endoplasmic reticulum (ER) lumen. Movement of ERAD-L substrates through the ER membrane is facilitated by HRD1 and DER1 which have lateral gates facing each other and which distort the membrane region between the lateral gates, making it much thinner than a normal phospholipid bilayer. Substrates insert into the membrane as a hairpin loop with one strand interacting with DER1 and the other with HRD1. The HRD1 complex interacts with the heterotrimeric CDC48-NPL4-UFD1 ATPase complex which is recruited by UBX2 via its interaction with CDC48 and which moves ubiquitinated substrates to the cytosol for targeting to the proteasome. The HRD1 complex interacts with the ERAD substrates HMG1 and HMG2. Interacts with KAR2.

Its subcellular location is the endoplasmic reticulum membrane. In terms of biological role, component of the endoplasmic reticulum quality control (ERQC) system involved in ubiquitin-dependent degradation of misfolded endoplasmic reticulum proteins. Component of the HRD1 ubiquitin ligase complex, which is part of the ERAD-L and ERAD-M pathways responsible for the rapid degradation of soluble lumenal and membrane proteins with misfolded lumenal domains (ERAD-L), or ER-membrane proteins with misfolded transmembrane domains (ERAD-M). ERAD-L substrates are ubiquitinated through HRD1 in conjunction with the E2 ubiquitin-conjugating enzymes UBC1 and UBC7-CUE1. Ubiquitinated substrates are then removed to the cytosol via the action of the CDC48-NPL4-UFD1 ATPase complex and targeted to the proteasome. ERAD-M substrates are processed by the same HRD1-HRD3 core complex, but only a subset of the other components is required for ERAD-M. Stabilizes the HRD1 ubiquitin-protein ligase. Also functions in recruiting misfolded protein substrates in conjunction with YOS9. The protein is ERAD-associated E3 ubiquitin-protein ligase component HRD3 (HRD3) of Saccharomyces cerevisiae (strain ATCC 204508 / S288c) (Baker's yeast).